Consider the following 349-residue polypeptide: tRNA N6-adenosine threonylcarbamoyltransferase (349 aa).

Residues histidine 115 and histidine 119 each coordinate Fe cation. Residues 137 to 141, aspartate 170, glycine 183, and asparagine 281 contribute to the substrate site; that span reads LASGG. Aspartate 309 serves as a coordination point for Fe cation.

The protein belongs to the KAE1 / TsaD family. It depends on Fe(2+) as a cofactor.

It localises to the cytoplasm. The catalysed reaction is L-threonylcarbamoyladenylate + adenosine(37) in tRNA = N(6)-L-threonylcarbamoyladenosine(37) in tRNA + AMP + H(+). In terms of biological role, required for the formation of a threonylcarbamoyl group on adenosine at position 37 (t(6)A37) in tRNAs that read codons beginning with adenine. Is involved in the transfer of the threonylcarbamoyl moiety of threonylcarbamoyl-AMP (TC-AMP) to the N6 group of A37, together with TsaE and TsaB. TsaD likely plays a direct catalytic role in this reaction. This chain is tRNA N6-adenosine threonylcarbamoyltransferase, found in Methylobacterium nodulans (strain LMG 21967 / CNCM I-2342 / ORS 2060).